We begin with the raw amino-acid sequence, 489 residues long: Interferon gamma receptor 1 (489 aa).

Residues 1 to 17 form the signal peptide; it reads MALLFLLPLVMQGVSRA. The Extracellular segment spans residues 18 to 245; sequence EMGTADLGPS…ITIFNSSIKG (228 aa). 3 N-linked (GlcNAc...) asparagine glycosylation sites follow: N34, N79, and N86. C77 and C85 form a disulfide bridge. C122 and C167 are oxidised to a cystine. N179 carries N-linked (GlcNAc...) asparagine glycosylation. Disulfide bonds link C195–C200 and C214–C235. The N-linked (GlcNAc...) asparagine glycan is linked to N240. A helical transmembrane segment spans residues 246–266; sequence SLWIPVVAALLLFLVLSLVFI. The Cytoplasmic portion of the chain corresponds to 267 to 489; it reads CFYIKKINPL…RPTEDSKEFS (223 aa). The interval 329 to 437 is disordered; sequence ATVPGMHTED…SEFPPNNKGE (109 aa). Residues 335 to 348 show a composition bias toward basic and acidic residues; that stretch reads HTEDNPGKVEHTEE. Positions 349–360 are enriched in polar residues; it reads LSSITEVVTTEE. S369 bears the Phosphoserine mark. Phosphothreonine is present on T372. S378 is modified (phosphoserine). Low complexity predominate over residues 379–391; the sequence is SSPLSSNQSEPGS. Residues 401-412 are compositionally biased toward basic and acidic residues; sequence NCSESDHSRNGF. S403 carries the post-translational modification Phosphoserine. The segment covering 415-429 has biased composition (low complexity); it reads DSSCLESHSSLSDSE. Y457 is modified (phosphotyrosine).

Belongs to the type II cytokine receptor family. In terms of assembly, monomer. Heterodimer with IFNGR2, to form the IFNG receptor complex. Interacts with JAK1. Interacts (when phosphorylated) with STAT1. Interacts with SOCS1. In terms of processing, phosphorylated at Ser/Thr residues. Phosphorylation of Tyr-457 is required for IFNG receptor signal transduction. Influenza virus infection leads to phosphorylation in a CSNK1A1-dependent manner. Post-translationally, ubiquitinated after phosphorylation in a CSNK1A1-dependent manner, leading to the lysosome-dependent degradation. Proteasomally degraded through 'Lys-48'-mediated ubiquitination. Ubiquitination is necessary for efficient IFNGR1 signaling.

Its subcellular location is the cell membrane. In terms of biological role, receptor subunit for interferon gamma/INFG that plays crucial roles in antimicrobial, antiviral, and antitumor responses by activating effector immune cells and enhancing antigen presentation. Associates with transmembrane accessory factor IFNGR2 to form a functional receptor. Upon ligand binding, the intracellular domain of IFNGR1 opens out to allow association of downstream signaling components JAK1 and JAK2. In turn, activated JAK1 phosphorylates IFNGR1 to form a docking site for STAT1. Subsequent phosphorylation of STAT1 leads to dimerization, translocation to the nucleus, and stimulation of target gene transcription. STAT3 can also be activated in a similar manner although activation seems weaker. IFNGR1 intracellular domain phosphorylation also provides a docking site for SOCS1 that regulates the JAK-STAT pathway by competing with STAT1 binding to IFNGR1. The chain is Interferon gamma receptor 1 from Homo sapiens (Human).